The primary structure comprises 240 residues: tRNA (guanine-N(1)-)-methyltransferase (240 aa).

Residues Gly-112 and Leu-132–Leu-137 each bind S-adenosyl-L-methionine.

This sequence belongs to the RNA methyltransferase TrmD family. In terms of assembly, homodimer.

The protein resides in the cytoplasm. It catalyses the reaction guanosine(37) in tRNA + S-adenosyl-L-methionine = N(1)-methylguanosine(37) in tRNA + S-adenosyl-L-homocysteine + H(+). Specifically methylates guanosine-37 in various tRNAs. In Cyanothece sp. (strain PCC 7425 / ATCC 29141), this protein is tRNA (guanine-N(1)-)-methyltransferase.